A 1054-amino-acid polypeptide reads, in one-letter code: Desmoglein-1 (1054 aa).

The signal sequence occupies residues 1 to 23 (MNWHFLRTATVLLIFLVVVEINS). The propeptide occupies 24–49 (EFRIQVRDYNTKNGTIKWHSIRRQKR). 3 N-linked (GlcNAc...) asparagine glycosylation sites follow: N36, N110, and N180. Cadherin domains lie at 50 to 157 (EWIK…PPVF), 158 to 269 (SMST…IPYM), 270 to 389 (EPSS…RPGS), and 386 to 493 (RPGS…KDSE). At 50 to 566 (EWIKFAAACR…NLSDNVHFGP (517 aa)) the chain is on the extracellular side. A disordered region spans residues 487 to 554 (GWEKDSEKVT…QSNNNHQELG (68 aa)). The span at 496-507 (TSSQNSGSSTGD) shows a compositional bias: low complexity. The segment covering 508-517 (SSGGTGGGGR) has biased composition (gly residues). Positions 523–534 (GDTTTNTGGKTS) are enriched in low complexity. The segment covering 542 to 554 (TQTQSNNNHQELG) has biased composition (polar residues). N557 carries N-linked (GlcNAc...) asparagine glycosylation. A helical membrane pass occupies residues 567–587 (AGIGLLIMGFLVLGLVPFLLM). Residues 588 to 1054 (CCDCGGAPGA…TKYSTVQYTK (467 aa)) lie on the Cytoplasmic side of the membrane. Desmoglein repeat repeat units lie at residues 830–856 (TYPS…TVTE), 857–886 (SYTT…ERVV), 887–916 (GPIS…ERVI), 917–944 (APSS…ERVI), and 945–973 (RPAS…ERVV). The disordered stretch occupies residues 1018 to 1040 (GHVRSSSDHHFSQTLGSASPSTA). Polar residues predominate over residues 1029 to 1040 (SQTLGSASPSTA).

As to quaternary structure, binds to JUP/plakoglobin. Interacts with PKP2. Interacts with DSC3; there is evidence to suggest that the interaction promotes cell-cell adhesion of keratinocytes.

It localises to the cell membrane. It is found in the cell junction. Its subcellular location is the desmosome. The protein resides in the cytoplasm. The protein localises to the nucleus. In terms of biological role, component of intercellular desmosome junctions. Involved in the interaction of plaque proteins and intermediate filaments mediating cell-cell adhesion. The chain is Desmoglein-1 (DSG1) from Canis lupus familiaris (Dog).